The primary structure comprises 303 residues: Probable RuBisCO transcriptional regulator (303 aa).

Positions 6-63 constitute an HTH lysR-type domain; the sequence is FTLDQLRIFQAIVVEGSFQKAAQSLYISQPAVSLQIQNLEQQLNAPLFDRSHRKAKLT. A DNA-binding region (H-T-H motif) is located at residues 23–42; it reads FQKAAQSLYISQPAVSLQIQ.

The protein belongs to the LysR transcriptional regulatory family.

It localises to the plastid. Its subcellular location is the chloroplast. Trans-acting transcriptional regulator of RuBisCO genes (rbcL and rbcS) expression. The sequence is that of Probable RuBisCO transcriptional regulator (rbcR) from Cyanidioschyzon merolae (strain NIES-3377 / 10D) (Unicellular red alga).